The following is a 548-amino-acid chain: MPVIRVRRERLESLTGLSIGELEELLFRLKCEVEEPEEGVLEVEVNPDRPDMYIGEGIARAVKGIAGVEEGWDPPELADTPLSLRVERVPQRPYIAAAVVYGVNVDELFLEELIQFQEKLHDSLGRRRAKIAIGFHDLAKLPSASVEYRLMTLDTRMKPLGYGGSEMSFREFLLADEKGSLYGGLATKDNSHPFLLSGGEVIAAPPVINSEITRVEPGTRDLFIDVTGTSAELVAKTLDIIVASLAEREGARVGRVRLEGPGAVWASTPLLSEAAAKLDPGTVSKALGVDLTPEEAALHLRRMRHNASPAGGLVNVRVPPFRVDILGEVDLVEDIAISIGYEALGPRWPGKFHGGSLRWETHVYRAVKDLLVGLGFTEVLQLVLTSPRLVEAAGFSSMAVEVLNPVQQEYSVLRPTLLITLLQTLRENQHRRKPVKVFEAGNAVYLEDGEPRDEEKLALGVLDEEAGFEDVQAPLYAVLRIMGVDFEVEEASHPMFMEGRTAAVKVGGERLGYIGEVKPEVLEAFGLEYPVAAAEISLEVLARWTSRT.

One can recognise a B5 domain in the interval 271–346 (LSEAAAKLDP…ISIGYEALGP (76 aa)). The Mg(2+) site is built by D324, D330, E333, and D334.

Belongs to the phenylalanyl-tRNA synthetase beta subunit family. Type 2 subfamily. Tetramer of two alpha and two beta subunits. Mg(2+) serves as cofactor.

The protein localises to the cytoplasm. It carries out the reaction tRNA(Phe) + L-phenylalanine + ATP = L-phenylalanyl-tRNA(Phe) + AMP + diphosphate + H(+). The chain is Phenylalanine--tRNA ligase beta subunit from Aeropyrum pernix (strain ATCC 700893 / DSM 11879 / JCM 9820 / NBRC 100138 / K1).